The chain runs to 548 residues: Eukaryotic translation initiation factor 3 subunit D (548 aa).

Lys53 carries the post-translational modification N6-acetyllysine. Position 161 is a phosphoserine (Ser161). The segment at 285 to 299 (DFDLLTVSETANEPP) is RNA gate. The tract at residues 523-548 (PDGTFSSDEDDEEEEEEEEEEEEEEA) is disordered. A phosphoserine mark is found at Ser528 and Ser529. Residues 529 to 548 (SDEDDEEEEEEEEEEEEEEA) are compositionally biased toward acidic residues.

Belongs to the eIF-3 subunit D family. Component of the eukaryotic translation initiation factor 3 (eIF-3) complex, which is composed of 13 subunits: EIF3A, EIF3B, EIF3C, EIF3D, EIF3E, EIF3F, EIF3G, EIF3H, EIF3I, EIF3J, EIF3K, EIF3L and EIF3M. The eIF-3 complex appears to include 3 stable modules: module A is composed of EIF3A, EIF3B, EIF3G and EIF3I; module B is composed of EIF3F, EIF3H, and EIF3M; and module C is composed of EIF3C, EIF3D, EIF3E, EIF3K and EIF3L. EIF3C of module C binds EIF3B of module A and EIF3H of module B, thereby linking the three modules. EIF3J is a labile subunit that binds to the eIF-3 complex via EIF3B. The eIF-3 complex interacts with RPS6KB1 under conditions of nutrient depletion. Mitogenic stimulation leads to binding and activation of a complex composed of MTOR and RPTOR, leading to phosphorylation and release of RPS6KB1 and binding of EIF4B to eIF-3.

Its subcellular location is the cytoplasm. In terms of biological role, mRNA cap-binding component of the eukaryotic translation initiation factor 3 (eIF-3) complex, a complex required for several steps in the initiation of protein synthesis of a specialized repertoire of mRNAs. The eIF-3 complex associates with the 40S ribosome and facilitates the recruitment of eIF-1, eIF-1A, eIF-2:GTP:methionyl-tRNAi and eIF-5 to form the 43S pre-initiation complex (43S PIC). The eIF-3 complex stimulates mRNA recruitment to the 43S PIC and scanning of the mRNA for AUG recognition. The eIF-3 complex is also required for disassembly and recycling of post-termination ribosomal complexes and subsequently prevents premature joining of the 40S and 60S ribosomal subunits prior to initiation. The eIF-3 complex specifically targets and initiates translation of a subset of mRNAs involved in cell proliferation, including cell cycling, differentiation and apoptosis, and uses different modes of RNA stem-loop binding to exert either translational activation or repression. In the eIF-3 complex, EIF3D specifically recognizes and binds the 7-methylguanosine cap of a subset of mRNAs. The protein is Eukaryotic translation initiation factor 3 subunit D of Bos taurus (Bovine).